We begin with the raw amino-acid sequence, 354 residues long: Uroporphyrinogen decarboxylase (354 aa).

Residues 27-31 (RQAGR), Asp77, Tyr154, Ser209, and His327 contribute to the substrate site.

The protein belongs to the uroporphyrinogen decarboxylase family. Homodimer.

Its subcellular location is the cytoplasm. The enzyme catalyses uroporphyrinogen III + 4 H(+) = coproporphyrinogen III + 4 CO2. The protein operates within porphyrin-containing compound metabolism; protoporphyrin-IX biosynthesis; coproporphyrinogen-III from 5-aminolevulinate: step 4/4. In terms of biological role, catalyzes the decarboxylation of four acetate groups of uroporphyrinogen-III to yield coproporphyrinogen-III. The polypeptide is Uroporphyrinogen decarboxylase (Shewanella denitrificans (strain OS217 / ATCC BAA-1090 / DSM 15013)).